The following is a 356-amino-acid chain: Alanine racemase (356 aa).

Lysine 35 functions as the Proton acceptor; specific for D-alanine in the catalytic mechanism. Lysine 35 carries the N6-(pyridoxal phosphate)lysine modification. Arginine 130 contributes to the substrate binding site. The Proton acceptor; specific for L-alanine role is filled by tyrosine 253. Methionine 301 lines the substrate pocket.

It belongs to the alanine racemase family. Requires pyridoxal 5'-phosphate as cofactor.

The catalysed reaction is L-alanine = D-alanine. Its pathway is amino-acid biosynthesis; D-alanine biosynthesis; D-alanine from L-alanine: step 1/1. Catalyzes the interconversion of L-alanine and D-alanine. May also act on other amino acids. This is Alanine racemase (alr) from Paraburkholderia phytofirmans (strain DSM 17436 / LMG 22146 / PsJN) (Burkholderia phytofirmans).